The primary structure comprises 3916 residues: Fusarin C synthetase (3916 aa).

The Ketosynthase family 3 (KS3) domain occupies 9–440 (KEPIAIIGTS…GTNVHAIIEQ (432 aa)). Active-site for beta-ketoacyl synthase activity residues include Cys-182, His-319, and His-360. Residues 548–869 (VFTGQGAQWP…VTRNIHDVEA (322 aa)) are malonyl-CoA:ACP transacylase (MAT) domain. The segment at 935 to 1068 (HPLLGARSVE…GQLRVEFSSL (134 aa)) is N-terminal hotdog fold. The segment at 935–1228 (HPLLGARSVE…GLTCTSLLRP (294 aa)) is dehydratase (DH) domain. Positions 935–1231 (HPLLGARSVE…CTSLLRPGPS (297 aa)) constitute a PKS/mFAS DH domain. The active-site Proton acceptor; for dehydratase activity is the His-967. Residues 1084–1231 (LTSVDMERFY…CTSLLRPGPS (148 aa)) are C-terminal hotdog fold. Catalysis depends on Asp-1141, which acts as the Proton donor; for dehydratase activity. Residues 1350 to 1584 (VGENLPAVVR…YMTSVMLSQA (235 aa)) are C-methyltransferase (CMeT) domain. Residues 2092-2266 (TYLLIGFTGG…AASVMHIGMV (175 aa)) are ketoreductase (KR) domain 1. The 78-residue stretch at 2372–2449 (EILAVVEEEF…ELCSTVVSHL (78 aa)) folds into the Carrier 1 domain. Ser-2409 carries the post-translational modification O-(pantetheine 4'-phosphoryl)serine. A disordered region spans residues 2482–2511 (ASPTENEPFTIRNSPNSTQVTSESGVDEET). Over residues 2486–2505 (ENEPFTIRNSPNSTQVTSES) the composition is skewed to polar residues. A condensation region spans residues 2522–2806 (PLSFAQERLW…VNLLPLRLKL (285 aa)). The segment at 2973-3385 (FEKCVVNQPD…RIAGDSQIKL (413 aa)) is adenylation. The Carrier 2 domain occupies 3493–3570 (KPLTETQERL…EMAAKIDGFT (78 aa)). Ser-3530 carries the O-(pantetheine 4'-phosphoryl)serine modification. Residues 3612–3833 (LTGATGFLGV…DFVPVDVVAA (222 aa)) form a thiolester reductase (R) domain region.

In the C-terminal section; belongs to the NRP synthetase family.

It participates in mycotoxin biosynthesis. Its function is as follows. Fusarin C synthetase; part of the gene cluster that mediates the biosynthesis of the mycotoxin fusarin C. Within the cluster, FUS1, FUS2, FUS8 and FUS9 are sufficient for fusarin production. The roles of the other FUS members are yet undetermined. The fusarin C synthetase FUS1 is responsible for the condensation of one acetyl-coenzyme A (CoA) unit with six malonyl-CoA units and the amide linkage of the arising heptaketide and homoserine, subsequently releasing the first intermediate, prefusarin, as an alcohol with an open ring structure. The cytochrome P450 monooxygenase FUS8 participates in multiple oxidation processes at carbon C-20 and is able to use the FUS1 product as substrate, resulting in formation of 20-hydroxy-prefusarin. This reaction seems to be essential before the 2-pyrrolidone ring closure can be catalyzed by FUS2, generating 20-hydroxy-fusarin. FUS8 is able to further oxidizes carbon C-20 after ring closure, resulting in the formation of carboxy-fusarin C. As the last step, FUS9 methylates the hydroxyl group at C-21 to generate fusarin C. Fusarin C can then rearrange to epi-fusarin C, the (z)-isomers, and fusarin A and fusarin D. The polypeptide is Fusarin C synthetase (Gibberella moniliformis (strain M3125 / FGSC 7600) (Maize ear and stalk rot fungus)).